The primary structure comprises 254 residues: Glutamate racemase (254 aa).

Residues 7 to 8 (DS) and 39 to 40 (YG) each bind substrate. Cysteine 70 acts as the Proton donor/acceptor in catalysis. Residues 71–72 (NT) and glutamate 147 each bind substrate. Cysteine 178 functions as the Proton donor/acceptor in the catalytic mechanism. 179–180 (TH) is a binding site for substrate.

The protein belongs to the aspartate/glutamate racemases family. Homodimer.

The enzyme catalyses L-glutamate = D-glutamate. It functions in the pathway cell wall biogenesis; peptidoglycan biosynthesis. Its function is as follows. Provides the (R)-glutamate required for cell wall biosynthesis. Converts L- or D-glutamate to D- or L-glutamate, respectively, but not other amino acids such as alanine, aspartate, and glutamine. The protein is Glutamate racemase of Aquifex pyrophilus.